We begin with the raw amino-acid sequence, 655 residues long: Methylenetetrahydrofolate reductase (NADPH) (655 aa).

The interval M1–E39 is disordered. S10, S18, S19, S20, S22, S24, S25, S28, and S29 each carry phosphoserine. Residues P11–G35 are compositionally biased toward low complexity. T33 is modified (phosphothreonine). E62 (proton donor/acceptor) is an active-site residue. Residues E62–R67 and T93–W94 contribute to the NAD(+) site. T93 is subject to Phosphothreonine. Residue T93 to W94 coordinates FAD. Phosphoserine is present on S102. Residues H126, R156 to D158, Y173 to A174, Y196, H200 to G203, D209, and K216 each bind FAD. D158 contacts substrate. Substrate-binding residues include Q227, Y320, and R324. S393 is modified (phosphoserine). T450 bears the Phosphothreonine mark. S-adenosyl-L-methionine-binding positions include N455, A460–T463, T480–Q484, T559, and T572.

The protein belongs to the methylenetetrahydrofolate reductase family. Homodimer. It depends on FAD as a cofactor. In terms of processing, phosphorylation of an N-terminal serine-rich phosphorylation region increases sensitivity to S-adenosylmethionine and inhibition.

The enzyme catalyses (6S)-5-methyl-5,6,7,8-tetrahydrofolate + NADP(+) = (6R)-5,10-methylene-5,6,7,8-tetrahydrofolate + NADPH + H(+). Its pathway is one-carbon metabolism; tetrahydrofolate interconversion. Its activity is regulated as follows. Allosterically regulated by S-adenosylmethionine (SAM). Its function is as follows. Catalyzes the conversion of 5,10-methylenetetrahydrofolate to 5-methyltetrahydrofolate, a cosubstrate for homocysteine remethylation to methionine. Represents a key regulatory connection between the folate and methionine cycles. This Bos taurus (Bovine) protein is Methylenetetrahydrofolate reductase (NADPH) (MTHFR).